Here is an 856-residue protein sequence, read N- to C-terminus: Dual specificity protein kinase TTK (856 aa).

N-acetylmethionine is present on Met1. Position 7 is a phosphoserine (Ser7). Thr33 carries the phosphothreonine modification. 5 positions are modified to phosphoserine: Ser37, Ser80, Ser281, Ser317, and Ser321. Phosphothreonine is present on Thr360. The residue at position 363 (Ser363) is a Phosphoserine. Residues 369–392 are disordered; the sequence is EETKEYQEPEVPESNQKQWQSKRK. 3 positions are modified to phosphoserine: Ser393, Ser435, and Ser454. The region spanning 524–790 is the Protein kinase domain; it reads YSILKQIGSG…IPELLAHPYV (267 aa). ATP-binding positions include 530–538 and Lys552; that span reads IGSGGSSKV. Catalysis depends on Asp646, which acts as the Proton acceptor. The residue at position 820 (Ser820) is a Phosphoserine. The span at 835-846 shows a compositional bias: low complexity; the sequence is YSGGESHNSSSS. The tract at residues 835–856 is disordered; sequence YSGGESHNSSSSKTFGKKREKK.

This sequence belongs to the protein kinase superfamily. Ser/Thr protein kinase family. Interacts with TPR; the interactions occurs in a microtubule-independent manner. Interacts with MAD1L1 and MAD2L1.

It catalyses the reaction L-seryl-[protein] + ATP = O-phospho-L-seryl-[protein] + ADP + H(+). The enzyme catalyses L-threonyl-[protein] + ATP = O-phospho-L-threonyl-[protein] + ADP + H(+). It carries out the reaction L-tyrosyl-[protein] + ATP = O-phospho-L-tyrosyl-[protein] + ADP + H(+). Its activity is regulated as follows. Inhibited by the ATP-competitive kinase inhibitor, SP600125. Involved in mitotic spindle assembly checkpoint signaling, a process that delays anaphase until chromosomes are bioriented on the spindle, and in the repair of incorrect mitotic kinetochore-spindle microtubule attachments. Phosphorylates MAD1L1 to promote the mitotic spindle assembly checkpoint. Phosphorylates CDCA8/Borealin leading to enhanced AURKB activity at the kinetochore. Phosphorylates SKA3 at 'Ser-34' leading to dissociation of the SKA complex from microtubules and destabilization of microtubule-kinetochore attachments. Phosphorylates KNL1, KNTC1 and autophosphorylates. Phosphorylates MCRS1 which enhances recruitment of KIF2A to the minus end of spindle microtubules and promotes chromosome alignment. The sequence is that of Dual specificity protein kinase TTK (TTK) from Macaca fascicularis (Crab-eating macaque).